A 26-amino-acid chain; its full sequence is Peroxidase 1 (26 aa).

Asp-15 is a Ca(2+) binding site.

It belongs to the peroxidase family. Classical plant (class III) peroxidase subfamily. It depends on heme b as a cofactor. Ca(2+) serves as cofactor.

It localises to the secreted. It catalyses the reaction 2 a phenolic donor + H2O2 = 2 a phenolic radical donor + 2 H2O. Functionally, removal of H(2)O(2), oxidation of toxic reductants, biosynthesis and degradation of lignin, suberization, auxin catabolism, response to environmental stresses such as wounding, pathogen attack and oxidative stress. These functions might be dependent on each isozyme/isoform in each plant tissue. In Vitis vinifera (Grape), this protein is Peroxidase 1.